The following is a 198-amino-acid chain: MDLIHRISRQFEDSARIKLEALEALAAPIAGAVEIMIGSLLNNGKILACGNGGSAADAQHFAAELVNRFEMERPPLAAIALTTDTSTLTSIANDYDFTQVFSKQVRALGHPGDVLLAISTSGNSPNVIEAIAAAREREMRVIALTGNDGGQIGALLDDGDVHLCVPAQRTARIQEVHLLTLHCLCDGIDCLLLGVEDQ.

Residues 36–198 (MIGSLLNNGK…DCLLLGVEDQ (163 aa)) form the SIS domain. 51-53 (NGG) serves as a coordination point for substrate. Positions 60 and 64 each coordinate Zn(2+). Residues Glu-64, 93 to 94 (ND), 119 to 121 (STS), Ser-124, and Gln-174 each bind substrate. Gln-174 and His-182 together coordinate Zn(2+).

It belongs to the SIS family. GmhA subfamily. Homotetramer. Zn(2+) is required as a cofactor.

The protein resides in the cytoplasm. The enzyme catalyses 2 D-sedoheptulose 7-phosphate = D-glycero-alpha-D-manno-heptose 7-phosphate + D-glycero-beta-D-manno-heptose 7-phosphate. It participates in carbohydrate biosynthesis; D-glycero-D-manno-heptose 7-phosphate biosynthesis; D-glycero-alpha-D-manno-heptose 7-phosphate and D-glycero-beta-D-manno-heptose 7-phosphate from sedoheptulose 7-phosphate: step 1/1. Its function is as follows. Catalyzes the isomerization of sedoheptulose 7-phosphate in D-glycero-D-manno-heptose 7-phosphate. The polypeptide is Phosphoheptose isomerase (Aromatoleum aromaticum (strain DSM 19018 / LMG 30748 / EbN1) (Azoarcus sp. (strain EbN1))).